The following is a 331-amino-acid chain: Laforin (331 aa).

Positions 1–124 constitute a CBM20 domain; that stretch reads MRFRFGVVVP…NNLVDGVYCL (124 aa). The residue at position 25 (serine 25) is a Phosphoserine; by AMPK. Residues tryptophan 32, lysine 87, 103 to 107, aspartate 197, aspartate 235, and arginine 241 each bind substrate; that span reads GPHHD. The 168-residue stretch at 156-323 folds into the Tyrosine-protein phosphatase domain; that stretch reads HYSRILPNIW…EEDFFQKFGK (168 aa). Cysteine 266 acts as the Phosphocysteine intermediate in catalysis. The short motif at 266–272 is the Glucan phosphatase signature motif CXAGXGR element; sequence CNAGVGR. Substrate is bound by residues 267 to 272 and tyrosine 304; that span reads NAGVGR.

The protein belongs to the protein-tyrosine phosphatase family. Homodimer. Interacts with itself. Interacts with PPP1R3B, PPP1R3C, PPP1R3D, HIRIP5, and EPM2AIP1. Binds glycogen and Lafora bodies. Interacts with NHLRC1/malin (via the NHL repeats). Forms a complex with NHLRC1/malin and HSP70. Interacts with PPP1R3D; in the presence of NHLC1/malin the interaction leads to ubiquitination and autophagic degradation of PPP1R3D. Interacts (via the phosphatase domain) with MAPT/Tau; the interaction dephosphorylates MAPT. Interacts with PRDM8. Post-translationally, polyubiquitinated by NHLRC1/malin. Phosphorylation on Ser-25 by AMPK affects the phosphatase activity of the enzyme and its ability to homodimerize and interact with NHLRC1, PPP1R3C or PRKAA2.

The protein localises to the cytoplasm. The protein resides in the endoplasmic reticulum membrane. Its subcellular location is the cell membrane. The catalysed reaction is O-phospho-L-tyrosyl-[protein] + H2O = L-tyrosyl-[protein] + phosphate. It carries out the reaction O-phospho-L-seryl-[protein] + H2O = L-seryl-[protein] + phosphate. It catalyses the reaction O-phospho-L-threonyl-[protein] + H2O = L-threonyl-[protein] + phosphate. Plays an important role in preventing glycogen hyperphosphorylation and the formation of insoluble aggregates, via its activity as glycogen phosphatase, and by promoting the ubiquitination of proteins involved in glycogen metabolism via its interaction with the E3 ubiquitin ligase NHLRC1/malin. Dephosphorylates phosphotyrosine and synthetic substrates, such as para-nitrophenylphosphate (pNPP), and has low activity with phosphoserine and phosphothreonine substrates (in vitro). Has also been shown to dephosphorylate MAPT. Shows strong phosphatase activity towards complex carbohydrates in vitro, avoiding glycogen hyperphosphorylation which is associated with reduced branching and formation of insoluble aggregates. Forms a complex with NHLRC1/malin and HSP70, which suppresses the cellular toxicity of misfolded proteins by promoting their degradation through the ubiquitin-proteasome system (UPS). Acts as a scaffold protein to facilitate PPP1R3C/PTG ubiquitination by NHLRC1/malin. Also promotes proteasome-independent protein degradation through the macroautophagy pathway. The chain is Laforin (EPM2A) from Canis lupus familiaris (Dog).